Here is a 297-residue protein sequence, read N- to C-terminus: Protease HtpX homolog (297 aa).

A helical transmembrane segment spans residues 16 to 36; that stretch reads IFMAIGFLVGGMAGMILAFVV. Residue H134 coordinates Zn(2+). E135 is an active-site residue. H138 provides a ligand contact to Zn(2+). 2 consecutive transmembrane segments (helical) span residues 147–167 and 175–195; these read MTVT…ALFF and IGSI…QMAI. Residue E200 coordinates Zn(2+).

This sequence belongs to the peptidase M48B family. Zn(2+) serves as cofactor.

The protein localises to the cell inner membrane. This chain is Protease HtpX homolog, found in Hyphomonas neptunium (strain ATCC 15444).